The sequence spans 447 residues: Serine--tRNA ligase (447 aa).

245 to 247 (TAE) serves as a coordination point for L-serine. ATP is bound by residues 276–278 (RKE) and Val-292. Glu-299 contributes to the L-serine binding site. 363 to 366 (ELAS) is an ATP binding site. Residue Thr-398 participates in L-serine binding.

Belongs to the class-II aminoacyl-tRNA synthetase family. Type-1 seryl-tRNA synthetase subfamily. As to quaternary structure, homodimer. The tRNA molecule binds across the dimer.

It is found in the cytoplasm. The catalysed reaction is tRNA(Ser) + L-serine + ATP = L-seryl-tRNA(Ser) + AMP + diphosphate + H(+). It catalyses the reaction tRNA(Sec) + L-serine + ATP = L-seryl-tRNA(Sec) + AMP + diphosphate + H(+). It functions in the pathway aminoacyl-tRNA biosynthesis; selenocysteinyl-tRNA(Sec) biosynthesis; L-seryl-tRNA(Sec) from L-serine and tRNA(Sec): step 1/1. Functionally, catalyzes the attachment of serine to tRNA(Ser). Is also able to aminoacylate tRNA(Sec) with serine, to form the misacylated tRNA L-seryl-tRNA(Sec), which will be further converted into selenocysteinyl-tRNA(Sec). This chain is Serine--tRNA ligase, found in Pyrobaculum neutrophilum (strain DSM 2338 / JCM 9278 / NBRC 100436 / V24Sta) (Thermoproteus neutrophilus).